Reading from the N-terminus, the 68-residue chain is Large ribosomal subunit protein uL29 (68 aa).

It belongs to the universal ribosomal protein uL29 family.

This is Large ribosomal subunit protein uL29 from Persephonella marina (strain DSM 14350 / EX-H1).